We begin with the raw amino-acid sequence, 786 residues long: Endonuclease MutS2 (786 aa).

G335–T342 is an ATP binding site. Positions L711 to K786 constitute a Smr domain.

Belongs to the DNA mismatch repair MutS family. MutS2 subfamily. As to quaternary structure, homodimer. Binds to stalled ribosomes, contacting rRNA.

In terms of biological role, endonuclease that is involved in the suppression of homologous recombination and thus may have a key role in the control of bacterial genetic diversity. Acts as a ribosome collision sensor, splitting the ribosome into its 2 subunits. Detects stalled/collided 70S ribosomes which it binds and splits by an ATP-hydrolysis driven conformational change. Acts upstream of the ribosome quality control system (RQC), a ribosome-associated complex that mediates the extraction of incompletely synthesized nascent chains from stalled ribosomes and their subsequent degradation. Probably generates substrates for RQC. In Bacillus cytotoxicus (strain DSM 22905 / CIP 110041 / 391-98 / NVH 391-98), this protein is Endonuclease MutS2.